The primary structure comprises 80 residues: Defensin-like protein 276 (80 aa).

The first 24 residues, 1-24 (MSGQKYQLVSLLLIICLLFSQSTA), serve as a signal peptide directing secretion. 4 cysteine pairs are disulfide-bonded: Cys-27–Cys-67, Cys-33–Cys-55, Cys-39–Cys-65, and Cys-43–Cys-66.

This sequence belongs to the DEFL family.

The protein localises to the secreted. The chain is Defensin-like protein 276 from Arabidopsis thaliana (Mouse-ear cress).